Consider the following 397-residue polypeptide: Serpin B10 (397 aa).

The Nuclear localization signal signature appears at 74-77 (KKRK).

Belongs to the serpin family. Ov-serpin subfamily.

It is found in the nucleus. Its subcellular location is the cytoplasm. Its function is as follows. Protease inhibitor that may play a role in the regulation of protease activities during hematopoiesis and apoptosis induced by TNF. May regulate protease activities in the cytoplasm and in the nucleus. This Sorex araneus (Eurasian common shrew) protein is Serpin B10 (SERPINB10).